The following is a 330-amino-acid chain: mRNA-capping enzyme (330 aa).

Lys82 (N6-GMP-lysine intermediate) is an active-site residue.

The protein belongs to the eukaryotic GTase family. As to quaternary structure, monomer. Mg(2+) serves as cofactor. Mn(2+) is required as a cofactor.

It catalyses the reaction a 5'-end diphospho-ribonucleoside in mRNA + GTP + H(+) = a 5'-end (5'-triphosphoguanosine)-ribonucleoside in mRNA + diphosphate. Functionally, mRNA capping. Transfers a GMP cap onto the end of mRNA that terminates with a 5'-diphosphate tail. The chain is mRNA-capping enzyme from Chlorella (PBCV-1).